Consider the following 591-residue polypeptide: Dolichyl-phosphooligosaccharide-protein glycotransferase 1 (591 aa).

Residues 1–5 are Cytoplasmic-facing; it reads MDRKV. The helical transmembrane segment at 6–26 threads the bilayer; it reads LMLAVILFALAVRFQNFGEIF. The Extracellular portion of the chain corresponds to 27 to 67; it reads DSGIYYTGYDSYYHMRLVEVMVKESFRPDYDYYINYPFGLK. The DXD motif 1 motif lies at 34–36; it reads GYD. Asp-36 provides a ligand contact to Mn(2+). Residues 68-88 traverse the membrane as a helical segment; the sequence is ITWPPLFDYILAFPGMLFGFH. Over 89–91 the chain is Cytoplasmic; it reads SSE. The helical transmembrane segment at 92–112 threads the bilayer; the sequence is IFAVFLPVILGVLSVVLICLT. Residues 113–121 are Extracellular-facing; it reads ALQIVNNQT. A helical membrane pass occupies residues 122 to 142; the sequence is FALISAFIYAAAPVAVWKTVL. The Cytoplasmic segment spans residues 143–147; sequence GQADH. Asp-146 provides a ligand contact to Mn(2+). The DXD motif 2 signature appears at 146–148; the sequence is DHH. His-147 is a binding site for a glycophospholipid. His-148 lines the Mn(2+) pocket. Residues 148-168 traverse the membrane as a helical segment; it reads HALVIFLFLLSAYLLLKDGVW. Position 169 (Lys-169) is a topological domain, extracellular. Residues 170–190 traverse the membrane as a helical segment; that stretch reads ILAGLPMLFMALAWLGSPIYG. Residues 191 to 219 are Cytoplasmic-facing; that stretch reads ALLAFSALVHFDRKALRLVAASYLIPAIS. The chain crosses the membrane as a helical span at residues 220 to 240; it reads FVLYPPVGISFFGLAAFLFVG. Over 241-252 the chain is Extracellular; that stretch reads SVVKGYEDRFRN. A helical transmembrane segment spans residues 253–273; sequence ATIYYIALSLATVLIIYFIPL. Topologically, residues 274 to 275 are cytoplasmic; that stretch reads PH. A helical transmembrane segment spans residues 276–296; the sequence is FEFVKGGINYIFGANIYLPTI. Positions 295-298 match the TIXE motif motif; sequence TISE. Residues 297–303 lie on the Extracellular side of the membrane; that stretch reads SEARSLQ. A helical membrane pass occupies residues 304 to 324; sequence IFEIISASGYIYFIFALISVL. The Cytoplasmic segment spans residues 325-327; it reads FFR. The chain crosses the membrane as a helical span at residues 328–344; sequence NRFVLSMFFLSFILALM. Topologically, residues 345-347 are extracellular; sequence QLR. Residue Arg-347 participates in a glycophospholipid binding. A helical membrane pass occupies residues 348-368; that stretch reads FTEVLVVPSALLSAYLVSLVL. Over 369 to 408 the chain is Cytoplasmic; sequence ERLEYPVFEKADEEEKSRRRKRKDRKVKQKNAEVEWKDHA. A helical transmembrane segment spans residues 409-429; the sequence is VVAAFLVILAIPCIVVAVVPF. The Extracellular segment spans residues 430 to 591; that stretch reads DLTEDWKEAL…DVKIFEVVGS (162 aa). Positions 465 to 467 are interacts with target acceptor peptide in protein substrate; that stretch reads WWD. The WWDYG motif motif lies at 465–469; that stretch reads WWDYG. Residues 521–535 carry the DKi motif motif; it reads EITMKDANNTKFPAI.

Belongs to the STT3 family. Mn(2+) is required as a cofactor. Mg(2+) serves as cofactor. The cofactor is Zn(2+).

It is found in the cell membrane. It catalyses the reaction an archaeal dolichyl phosphooligosaccharide + [protein]-L-asparagine = an archaeal dolichyl phosphate + a glycoprotein with the oligosaccharide chain attached by N-beta-D-glycosyl linkage to a protein L-asparagine.. The protein operates within protein modification; protein glycosylation. Functionally, oligosaccharyl transferase (OST) that catalyzes the initial transfer of a defined glycan (a GalNAc-linked heptasaccharide composed of 4 Hex, 3 dHex and a sulfate for A.fulgidus AglB-S) from the lipid carrier dolichol-monophosphate to an asparagine residue within an Asn-X-Ser/Thr consensus motif in nascent polypeptide chains, the first step in protein N-glycosylation. This chain is Dolichyl-phosphooligosaccharide-protein glycotransferase 1 (aglB1), found in Archaeoglobus fulgidus (strain ATCC 49558 / DSM 4304 / JCM 9628 / NBRC 100126 / VC-16).